Consider the following 698-residue polypeptide: Polyphosphate kinase 1 (698 aa).

An ATP-binding site is contributed by Asn46. The Mg(2+) site is built by Arg377 and Arg407. Residue His437 is the Phosphohistidine intermediate of the active site. ATP contacts are provided by Tyr470, Arg566, and His594.

This sequence belongs to the polyphosphate kinase 1 (PPK1) family. The cofactor is Mg(2+). An intermediate of this reaction is the autophosphorylated ppk in which a phosphate is covalently linked to a histidine residue through a N-P bond.

It carries out the reaction [phosphate](n) + ATP = [phosphate](n+1) + ADP. Its function is as follows. Catalyzes the reversible transfer of the terminal phosphate of ATP to form a long-chain polyphosphate (polyP). This is Polyphosphate kinase 1 from Chlorobaculum tepidum (strain ATCC 49652 / DSM 12025 / NBRC 103806 / TLS) (Chlorobium tepidum).